The following is a 262-amino-acid chain: MKLNDIINIIEDIAPVNLKEGFDNVGLMVGDREKNITKILLALDCTEEVIKEAKEMGAELILTHHPLLFRKPSTITTDTLLGRKIISLIKNDINLYSAHTNWDSVKGGLNDTLVEILGFNKGIIMDKSPVDSEAGIGRVVELTKEMTVLEIINLIKSSLGVKNLRYAGDLNEVIKKIAIVNGSGQDFFGDAKKLGADLIITGDTTYHFVSDYKEMGLNILDIGHFNSEWPVLIKVSEKVKERLDSDVEFIVSKEAKDPFEFI.

Histidine 64, histidine 65, aspartate 103, histidine 224, and glutamate 228 together coordinate a divalent metal cation.

It belongs to the GTP cyclohydrolase I type 2/NIF3 family. As to quaternary structure, homohexamer.

The chain is GTP cyclohydrolase 1 type 2 homolog from Clostridium perfringens (strain 13 / Type A).